The chain runs to 204 residues: FMN-dependent NADH:quinone oxidoreductase (204 aa).

Residues Ser-10 and 16–18 (SKS) contribute to the FMN site.

The protein belongs to the azoreductase type 1 family. As to quaternary structure, homodimer. Requires FMN as cofactor.

The enzyme catalyses 2 a quinone + NADH + H(+) = 2 a 1,4-benzosemiquinone + NAD(+). It catalyses the reaction N,N-dimethyl-1,4-phenylenediamine + anthranilate + 2 NAD(+) = 2-(4-dimethylaminophenyl)diazenylbenzoate + 2 NADH + 2 H(+). Quinone reductase that provides resistance to thiol-specific stress caused by electrophilic quinones. Functionally, also exhibits azoreductase activity. Catalyzes the reductive cleavage of the azo bond in aromatic azo compounds to the corresponding amines. This chain is FMN-dependent NADH:quinone oxidoreductase, found in Ruegeria pomeroyi (strain ATCC 700808 / DSM 15171 / DSS-3) (Silicibacter pomeroyi).